Consider the following 306-residue polypeptide: Porphobilinogen deaminase (306 aa).

Cys237 is modified (S-(dipyrrolylmethanemethyl)cysteine).

This sequence belongs to the HMBS family. As to quaternary structure, monomer. The cofactor is dipyrromethane.

The catalysed reaction is 4 porphobilinogen + H2O = hydroxymethylbilane + 4 NH4(+). The protein operates within porphyrin-containing compound metabolism; protoporphyrin-IX biosynthesis; coproporphyrinogen-III from 5-aminolevulinate: step 2/4. In terms of biological role, tetrapolymerization of the monopyrrole PBG into the hydroxymethylbilane pre-uroporphyrinogen in several discrete steps. This chain is Porphobilinogen deaminase, found in Syntrophus aciditrophicus (strain SB).